Here is a 562-residue protein sequence, read N- to C-terminus: Phosphoglucomutase-1 (562 aa).

An N-acetylmethionine modification is found at Met-1. Lys-16 is modified (N6-acetyllysine). Arg-23 provides a ligand contact to alpha-D-glucose 1,6-bisphosphate. Thr-115 is subject to Phosphothreonine. Position 117 (Ser-117) interacts with alpha-D-glucose 1,6-bisphosphate. The Phosphoserine intermediate role is filled by Ser-117. Ser-117 is a binding site for Mg(2+). Phosphoserine occurs at positions 117 and 134. A Phosphothreonine modification is found at Thr-185. Ser-201, Ser-206, and Ser-213 each carry phosphoserine. Mg(2+) is bound by residues Asp-288, Asp-290, and Asp-292. The alpha-D-glucose 1,6-bisphosphate site is built by Asp-292 and Arg-293. An N6-acetyllysine modification is found at Lys-349. Tyr-353 is modified (phosphotyrosine). Thr-357 is an alpha-D-glucose 1,6-bisphosphate binding site. Ser-369 carries the post-translational modification Phosphoserine. The alpha-D-glucose 1,6-bisphosphate site is built by Glu-376, Ser-378, and Lys-389. Ser-378 carries the post-translational modification Phosphoserine. Lys-419 is modified (N6-succinyllysine). At Thr-467 the chain carries Phosphothreonine; by PAK1. A phosphoserine mark is found at Ser-477, Ser-485, and Ser-505. Thr-507 is subject to Phosphothreonine. Phosphoserine occurs at positions 509 and 541.

This sequence belongs to the phosphohexose mutase family. Monomer. Mg(2+) serves as cofactor. Post-translationally, phosphorylation at Thr-467 by PAK1 significantly enhances enzymatic activity.

It localises to the cytoplasm. It catalyses the reaction alpha-D-glucose 1-phosphate = alpha-D-glucose 6-phosphate. The enzyme catalyses O-phospho-L-seryl-[protein] + alpha-D-glucose 1-phosphate = alpha-D-glucose 1,6-bisphosphate + L-seryl-[protein]. The catalysed reaction is alpha-D-glucose 1,6-bisphosphate + L-seryl-[protein] = O-phospho-L-seryl-[protein] + alpha-D-glucose 6-phosphate. Its activity is regulated as follows. Glucose-1,6-bisphosphate enhances phosphorylation of the active site Ser-117, and thereby increases enzyme activity. In terms of biological role, catalyzes the reversible isomerization of alpha-D-glucose 1-phosphate to alpha-D-glucose 6-phosphate. The mechanism proceeds via the intermediate compound alpha-D-glucose 1,6-bisphosphate. This enzyme participates in both the breakdown and synthesis of glucose. In Homo sapiens (Human), this protein is Phosphoglucomutase-1 (PGM1).